The sequence spans 689 residues: Centrosomal protein of 78 kDa (689 aa).

Phosphoserine is present on residues S325 and S327. Disordered regions lie at residues 432–451, 563–589, and 614–689; these read SSEV…VPEK, PQMT…EPKQ, and DSFP…TESH. Positions 450–505 form a coiled coil; the sequence is EKTSIEQEALQEKLEECLKQLKEERVIRLKVDKRVSELEHENAQLRNINFSLSEAL. Composition is skewed to basic and acidic residues over residues 573–587 and 666–689; these read PKEE…KPEP and QRKE…TESH.

It belongs to the CEP78 family. Interacts with PLK4. Interacts with FAM161A. Interacts with IFT20; regulating IFT20 stability and localization. Interacts with TTC21A; regulating TTC21A stability and localization. Interacts with USP16; promoting USP16-dependent deubiquitination of tektins. Interacts with DCAF1/VPRBP; promoting localization of the EDVP complex to centrosomes. Interacts with CEP350; promoting CEP78 localization to centrosome and centriole. In terms of tissue distribution, widely expressed. Expressed in different retinal cell types with higher expression in cone compared to rod cells (at protein level).

It localises to the cytoplasm. It is found in the cytoskeleton. The protein localises to the microtubule organizing center. Its subcellular location is the centrosome. The protein resides in the centriole. It localises to the cilium basal body. Centriole wall protein that localizes to mature centrioles and regulates centriole and cilia biogenesis. Involved in centrosome duplication: required for efficient PLK4 centrosomal localization and PLK4-induced overduplication of centrioles. Involved in cilium biogenesis and controls cilium length. Acts as a regulator of protein stability by preventing ubiquitination of centrosomal proteins, such as CCP110 and tektins. Associates with the EDVP complex, preventing ubiquitination and degradation of CCP110. Promotes deubiquitination of tektin proteins (TEKT1, TEKT2, TEK3, TEKT4 and TEKT5) via its interaction with USP16. The protein is Centrosomal protein of 78 kDa of Homo sapiens (Human).